We begin with the raw amino-acid sequence, 1407 residues long: JmjC domain-containing histone demethylation protein 1 (1407 aa).

2 disordered regions span residues 1–86 (MISA…SSTI) and 98–151 (PTFT…NAFS). Basic and acidic residues-rich tracts occupy residues 55–67 (DHVRSTPTDKRPS) and 125–140 (PVERPAKRPRSERDES). Residues 141-150 (SYTQHRSNAF) show a composition bias toward polar residues. Residues 323–382 (QASCATCNLVRIPVDNEDQDVTWISCDGCKRWFHIVCAGFKNDRETRTVDKFICKTCRPI) form a PHD-type zinc finger. The 159-residue stretch at 577 to 735 (VSQSKLGRLI…MQIKIAKIEK (159 aa)) folds into the JmjC domain. Thr-628 serves as a coordination point for substrate. Fe cation contacts are provided by His-631 and Asp-633. Lys-648 provides a ligand contact to substrate. His-703 provides a ligand contact to Fe cation. Disordered stretches follow at residues 893 to 987 (KLSL…LGPK), 1004 to 1027 (KEENNGASGSQMTVSTSSLGHHTP), 1122 to 1183 (IKAQ…QDSV), and 1252 to 1389 (DEMD…SLRL). 2 stretches are compositionally biased toward basic and acidic residues: residues 896–914 (LAEKRPAGRPSRRSERNAD) and 928–938 (LSERPAVDIQK). The segment covering 1008–1027 (NGASGSQMTVSTSSLGHHTP) has biased composition (polar residues). Basic and acidic residues predominate over residues 1254 to 1264 (MDIHDQVDAGG). Residues 1273–1284 (PSSGSRQSSRQP) show a composition bias toward low complexity. Over residues 1285–1296 (RQVERYMPEVHF) the composition is skewed to basic and acidic residues. The segment covering 1297 to 1349 (AKTAKSTTTTPQTTRRSSFGSSGRKTTPGLSSGSKKSGSRPSSSHGKKSLSPS) has biased composition (low complexity).

Belongs to the JHDM1 histone demethylase family. The cofactor is Fe(2+).

The protein resides in the nucleus. The enzyme catalyses N(6),N(6)-dimethyl-L-lysyl(36)-[histone H3] + 2 2-oxoglutarate + 2 O2 = L-lysyl(36)-[histone H3] + 2 formaldehyde + 2 succinate + 2 CO2. Histone demethylase that specifically demethylates 'Lys-36' of histone H3, thereby playing a central role in histone code. The sequence is that of JmjC domain-containing histone demethylation protein 1 (jhd1) from Emericella nidulans (strain FGSC A4 / ATCC 38163 / CBS 112.46 / NRRL 194 / M139) (Aspergillus nidulans).